We begin with the raw amino-acid sequence, 706 residues long: MQSDDRSVREGSDSSQTFLMKMAQPTGELTHPSQQQQQQLLQQQSFRSIFGGASDTAEEIDTETDSNHRRPHSFGAAATTPAKLANKNVAPFLVKHIPEQYGPLGSRRTDKLEDLSSPNSKFCYRHRPDLKCRRQADEPSMDKLQRELETLPPSDQQGIAHVWSLFSAAPAKHRKLILQGIMAQCCFPQLSFVSATVRDLIRIDFLTALPPEISFKILCYLDTTSLCKAAQVSSRWRALADDDVVWHRMCEQHIHRKCKKCGWGLPLLERKRLRESKREIELRATTWDVSGPAQNAGGAECSAPHADDVITQKRKADSSDDETAIVKRHCSSLDARPEPDEDYYTTRYRPWKEVYKDRFKVGTNWKYGRCSTKVFKGHTNGVMCLQFEDNILATGSYDATIKIWDTETGEELRTLRGHQSGIRCLQFDDTKLISGSMDRSLKVWNWRTGECISTYTGHRGGVIGLHFDATILASASVDKTVKIWNFEDKSTFLLRGHTDWVNAVRVDTTSRTVFSASDDCTVRLWDLDTKACLRTFHGHVGQVQQVVPLPREFEFEDHDAECDNDNMSTTSGDTESNSLQATLGLESNATETSVFGPSFDNGRPAPPRYIVTSALDSTIRLWETTTGRCLRTFFGHLEGVWALGADTLRIVSGAEDRMVKIWDPRTGKCERTFTGHSGPVTCIGLGDSRFATGSEDCEVRMYSFRN.

Residues 1–12 (MQSDDRSVREGS) show a composition bias toward basic and acidic residues. 2 disordered regions span residues 1–43 (MQSD…LLQQ) and 56–76 (TAEEIDTETDSNHRRPHSFGA). Over residues 34–43 (QQQQQQLLQQ) the composition is skewed to low complexity. The F-box domain maps to 203 to 249 (IDFLTALPPEISFKILCYLDTTSLCKAAQVSSRWRALADDDVVWHRM). 7 WD repeats span residues 377–414 (GHTNGVMCLQFEDNILATGSYDATIKIWDTETGEELRT), 417–456 (GHQSGIRCLQFDDTKLISGSMDRSLKVWNWRTGECISTYT), 458–494 (HRGGVIGLHFDATILASASVDKTVKIWNFEDKSTFLL), 496–537 (GHTD…RTFH), 589–632 (ATET…CLRT), 635–672 (GHLEGVWALGADTLRIVSGAEDRMVKIWDPRTGKCERT), and 675–706 (GHSGPVTCIGLGDSRFATGSEDCEVRMYSFRN).

This sequence belongs to the WD repeat MET30/SCONB/SCON-2 family. In terms of assembly, component of the SCF(sconB) E3 ubiquitin ligase complex.

It functions in the pathway protein modification; protein ubiquitination. In terms of biological role, component of the SCF(sconB) E3 ubiquitin ligase complex involved in the regulation of sulfur metabolite repression, probably by mediating the inactivation or degradation of the metR transcription factor. The sequence is that of Probable E3 ubiquitin ligase complex SCF subunit sconB (sconB) from Aspergillus flavus (strain ATCC 200026 / FGSC A1120 / IAM 13836 / NRRL 3357 / JCM 12722 / SRRC 167).